A 756-amino-acid chain; its full sequence is Ent-kaur-16-ene synthase, chloroplastic (756 aa).

Asp496, Asp500, Asn639, and Glu647 together coordinate Mg(2+). The DDXXD motif signature appears at Asp496–Asp500.

The protein belongs to the terpene synthase family. It depends on Mg(2+) as a cofactor. Highly expressed in panicles and at lower levels in leaves and stems.

It is found in the plastid. Its subcellular location is the chloroplast. The enzyme catalyses ent-copalyl diphosphate = ent-kaur-16-ene + diphosphate. It participates in plant hormone biosynthesis; gibberellin biosynthesis. Its function is as follows. Catalyzes the conversion of ent-copalyl diphosphate to the gibberellin precursor ent-kaur-16-ene. The protein is Ent-kaur-16-ene synthase, chloroplastic (KS1) of Oryza sativa subsp. japonica (Rice).